Here is a 1465-residue protein sequence, read N- to C-terminus: DNA polymerase III PolC-type (1465 aa).

One can recognise an Exonuclease domain in the interval 427 to 583 (YVVFDVETTG…YDAEATGRLL (157 aa)).

The protein belongs to the DNA polymerase type-C family. PolC subfamily.

It is found in the cytoplasm. The enzyme catalyses DNA(n) + a 2'-deoxyribonucleoside 5'-triphosphate = DNA(n+1) + diphosphate. Required for replicative DNA synthesis. This DNA polymerase also exhibits 3' to 5' exonuclease activity. The sequence is that of DNA polymerase III PolC-type from Streptococcus pyogenes serotype M6 (strain ATCC BAA-946 / MGAS10394).